The primary structure comprises 828 residues: MKLSRRSFMKANAVAAAAAAAGLSVPGVARAVVGQQEAIKWDKAPCRFCGTGCGVLVGTQQGRVVACQGDPDAPVNRGLNCIKGYFLPKIMYGKDRLTQPMLRMKDGSYHKDGEFTPVSWEQAFDVMEEKFKTALKEKGPEAIGMFGSGQWTIWEGYAAAKLFKAGFRSNNIDPNARHCMASAVVGFMRTFGMDEPMGCYDDIEQADAFVLWGSNMAEMHPILWSRITNRRLSDPNVKVAVLSTFQHRSFELADNGIVFTPQSDLVILNYIANYIIQNNAVNQDFFTKHVNLRKGATDIGYGLRPTHPLEKAAKNPGSDASEPMSFDEYKAFVAEYTLDKTAEMTGVPKDQLEQLAQLYADPNKRVISYWTMGFNQHTRGVWANNLVYNLHLLTGKISQPGCGPFSLTGQPSACGTAREVGTFSHRLPADMVVTNEKHRDICEKHWQIPAGTIPAKVGLHAVAQDRALKDGKLNVYWVMCNNNMQAGPNINEDRMPGWRDPRNFIIVSDPYPTVSALSADLILPTAMWVEKEGAYGNAERRTQFWRQQIKAPGEAKSDLWQLVQFSRRFKTEEVWPEALLAQKPELRGKTLYDVLFATPAVSKFPLSELKEDQLNDESRELGFYLQKGLFEEYAWFGRGHGHDLAPFDDYHNARGLRWPVVEGKETQWRYSEGNDPYVKAGEGYKFYGKPDGKAVIFALPFEPAAESPDNEYDLWLSTGRVLEHWHTGSMTRRVPELHRAFPEAVVFIHPLDAKARDLRRGDKVKVSSRRGEVISIVETRGRNRPPQGLVYMPFFDAAQLVNNLTLDATDPLSKETDFKKCAVKLAKV.

The segment at residues 1–31 (MKLSRRSFMKANAVAAAAAAAGLSVPGVARA) is a signal peptide (tat-type signal). Positions 39 to 95 (IKWDKAPCRFCGTGCGVLVGTQQGRVVACQGDPDAPVNRGLNCIKGYFLPKIMYGKD) constitute a 4Fe-4S Mo/W bis-MGD-type domain. Positions 46, 49, 53, and 81 each coordinate [4Fe-4S] cluster. Mo-bis(molybdopterin guanine dinucleotide) contacts are provided by residues K83, Q150, N175, C179, 212-219 (WGSNMAEM), 243-247 (STFQH), 262-264 (QSD), M372, Q376, N482, 508-509 (SD), K531, D558, and 718-727 (TGRVLEHWHT). Position 794 (F794) interacts with substrate. 2 residues coordinate Mo-bis(molybdopterin guanine dinucleotide): N802 and K819.

Belongs to the prokaryotic molybdopterin-containing oxidoreductase family. NasA/NapA/NarB subfamily. Component of the periplasmic nitrate reductase NapAB complex composed of NapA and NapB. [4Fe-4S] cluster is required as a cofactor. It depends on Mo-bis(molybdopterin guanine dinucleotide) as a cofactor. In terms of processing, predicted to be exported by the Tat system. The position of the signal peptide cleavage has not been experimentally proven.

It localises to the periplasm. It carries out the reaction 2 Fe(II)-[cytochrome] + nitrate + 2 H(+) = 2 Fe(III)-[cytochrome] + nitrite + H2O. In terms of biological role, catalytic subunit of the periplasmic nitrate reductase complex NapAB. Receives electrons from NapB and catalyzes the reduction of nitrate to nitrite. In Salmonella paratyphi A (strain ATCC 9150 / SARB42), this protein is Periplasmic nitrate reductase.